The sequence spans 263 residues: MLRICGLGVVLSLAVAAVAVMAVWLMDWWGPRPGIRLFLPEELARYRGGPGDPGLYLALLGRVYDVSSGRRHYEPGAHYSGFAGRDASRAFVTGDYSEAGLVDDINGLSSSEILTLHNWLSFYEKNYVFVGRLVGRFYRKDGLPTSELTQVEAMVTKGMEANEQEQREKQKFPPCNSEWSSAKGSRLWCSQKSGGVHRDWIGVPRKLYKPGAKEPHCVCVRTTGPPSDQQDNPRHSNHGDLDNPNLEEYTGCPPLATTCSFPL.

The first 22 residues, 1 to 22 (MLRICGLGVVLSLAVAAVAVMA), serve as a signal peptide directing secretion. Residues 35–134 (IRLFLPEELA…KNYVFVGRLV (100 aa)) form the Cytochrome b5 heme-binding domain. The interval 220–249 (VRTTGPPSDQQDNPRHSNHGDLDNPNLEEY) is disordered. Positions 231–241 (DNPRHSNHGDL) are enriched in basic and acidic residues.

This sequence belongs to the cytochrome b5 family. MAPR subfamily. In terms of tissue distribution, expressed in various tissues including brain, heart, adrenal gland, and kidney. In the brain, mainly expressed in pyramidal cells around the CA3 region of Ammon horn in hippocampus. Present in brain (at protein level).

It is found in the secreted. Its function is as follows. Heme-binding protein which promotes neuronal but not astrocyte differentiation. The chain is Neuferricin from Mus musculus (Mouse).